A 435-amino-acid chain; its full sequence is Enolase (435 aa).

Gln-163 provides a ligand contact to (2R)-2-phosphoglycerate. Glu-205 (proton donor) is an active-site residue. 3 residues coordinate Mg(2+): Asp-243, Glu-292, and Asp-319. The (2R)-2-phosphoglycerate site is built by Lys-344, Arg-373, Ser-374, and Lys-395. The active-site Proton acceptor is the Lys-344.

It belongs to the enolase family. Mg(2+) is required as a cofactor.

It is found in the cytoplasm. It localises to the secreted. The protein resides in the cell surface. It carries out the reaction (2R)-2-phosphoglycerate = phosphoenolpyruvate + H2O. The protein operates within carbohydrate degradation; glycolysis; pyruvate from D-glyceraldehyde 3-phosphate: step 4/5. Its function is as follows. Catalyzes the reversible conversion of 2-phosphoglycerate (2-PG) into phosphoenolpyruvate (PEP). It is essential for the degradation of carbohydrates via glycolysis. This chain is Enolase, found in Streptococcus agalactiae serotype Ia (strain ATCC 27591 / A909 / CDC SS700).